The primary structure comprises 1045 residues: FERM, ARHGEF and pleckstrin domain-containing protein 1 (1045 aa).

Residues 1–37 (MGEIEQRPTPGSRLGAPENSGISTLERGQKPPPTPSG) are disordered. Residues Ser-20 and Ser-23 each carry the phosphoserine modification. A Phosphothreonine modification is found at Thr-24. An FERM domain is found at 40–320 (VSIKIQMLDD…EHHAFFRLFE (281 aa)). A phosphoserine mark is found at Ser-340, Ser-373, Ser-389, Ser-403, Ser-418, Ser-427, and Ser-433. The disordered stretch occupies residues 392–534 (SASLTFGEGA…TDDEDEGRRK (143 aa)). 2 stretches are compositionally biased toward polar residues: residues 471-489 (TGSL…NSQG) and 496-511 (VTLS…QASP). A phosphoserine mark is found at Ser-510 and Ser-514. The DH domain maps to 540–730 (KAYFIAKEVS…TEMVAQLHGT (191 aa)). In terms of domain architecture, PH 1 spans 759–856 (EFIRLGSLSK…WVEDIQMAID (98 aa)). Phosphoserine occurs at positions 833, 872, and 878. The segment at 866–902 (PEFLASSPPDNKSPDEATAADQESEDDLSASRTSLER) is disordered. Residue Thr-883 is modified to Phosphothreonine. Phosphoserine is present on residues Ser-889, Ser-896, and Ser-899. Positions 932 to 1029 (ENQLSGNLLR…WMEVIRSATS (98 aa)) constitute a PH 2 domain.

Interacts with CADM1. Interacts with RAC1.

It localises to the cell membrane. The protein resides in the synapse. Its subcellular location is the synaptosome. The protein localises to the cytoplasm. It is found in the cytosol. It localises to the cell projection. The protein resides in the filopodium. Its subcellular location is the dendrite. The protein localises to the dendritic spine. Functionally, functions as a guanine nucleotide exchange factor for RAC1. May play a role in semaphorin signaling. Plays a role in the assembly and disassembly of dendritic filopodia, the formation of dendritic spines, regulation of dendrite length and ultimately the formation of synapses. The chain is FERM, ARHGEF and pleckstrin domain-containing protein 1 (FARP1) from Pongo abelii (Sumatran orangutan).